The primary structure comprises 309 residues: Olfactory receptor 1A1 (309 aa).

Topologically, residues 1-25 (MRENNQSSTLEFILLGVTGQQEQED) are extracellular. The N-linked (GlcNAc...) asparagine glycan is linked to Asn-5. Residues 26 to 49 (FFYILFLFIYPITLIGNLLIVLAI) traverse the membrane as a helical segment. The Cytoplasmic segment spans residues 50–57 (CSDVRLHN). Residues 58–79 (PMYFLLANLSLVDIFFSSVTIP) traverse the membrane as a helical segment. Over 80 to 100 (KMLANHLLGSKSISFGGCLTQ) the chain is Extracellular. A disulfide bridge connects residues Cys-97 and Cys-189. Residues 101-120 (MYFMIALGNTDSYILAAMAY) traverse the membrane as a helical segment. Residues 121–139 (DRAVAISRPLHYTTIMSPR) lie on the Cytoplasmic side of the membrane. A helical transmembrane segment spans residues 140-158 (SCIWLIAGSWVIGNANALP). Residues 159–195 (HTLLTASLSFCGNQEVANFYCDITPLLKLSCSDIHFH) lie on the Extracellular side of the membrane. The chain crosses the membrane as a helical span at residues 196–218 (VKMMYLGVGIFSVPLLCIIVSYI). Over 219–235 (RVFSTVFQVPSTKGVLK) the chain is Cytoplasmic. Residues 236 to 258 (AFSTCGSHLTVVSLYYGTVMGTY) traverse the membrane as a helical segment. Topologically, residues 259 to 270 (FRPLTNYSLKDA) are extracellular. Residue Asn-264 is glycosylated (N-linked (GlcNAc...) asparagine). A helical transmembrane segment spans residues 271–290 (VITVMYTAVTPMLNPFIYSL). The Cytoplasmic segment spans residues 291-309 (RNRDMKAALRKLFNKRISS).

This sequence belongs to the G-protein coupled receptor 1 family.

The protein resides in the cell membrane. In terms of biological role, odorant receptor. This Homo sapiens (Human) protein is Olfactory receptor 1A1 (OR1A1).